An 855-amino-acid chain; its full sequence is Potassium channel AKT2 (855 aa).

Low complexity predominate over residues 1–12; that stretch reads MKTSSFESASSS. The interval 1 to 24 is disordered; that stretch reads MKTSSFESASSSGGSGGGGGGGGG. Residues 1 to 75 are Cytoplasmic-facing; it reads MKTSSFESAS…PLDSRYRCWD (75 aa). Over residues 13–24 the composition is skewed to gly residues; it reads GGSGGGGGGGGG. Residues 76-96 traverse the membrane as a helical segment; it reads TFMVVLVAYSAWVYPFEVAFM. At 97-105 the chain is on the extracellular side; the sequence is NASPKGGLE. Residues 106–126 traverse the membrane as a helical segment; sequence VADIVVDLFFAVDIVLTFFVA. The Cytoplasmic segment spans residues 127 to 149; sequence YIDSRTQLLVRDRRRIATRYLST. Residues 150 to 170 traverse the membrane as a helical segment; that stretch reads FFIMDVASTIPFQGLAYIVTG. Topologically, residues 171 to 179 are extracellular; the sequence is EVRESPAFS. Residues 180–200 form a helical; Voltage-sensor membrane-spanning segment; it reads LLGILRLWRLRKVKQFFTRLE. The Cytoplasmic segment spans residues 201-214; that stretch reads KDIRFNYFWIRCAR. Residues 215-235 traverse the membrane as a helical segment; the sequence is LIAVTLFLVHCAGCLYYLIAD. The Extracellular portion of the chain corresponds to 236–262; the sequence is RYPHREKTWIGAVIPDFQEASLWIRYT. Positions 263–282 form an intramembrane region, pore-forming; that stretch reads SSVYWSITTMTTVGYGDMHA. Over 283–285 the chain is Extracellular; sequence QNT. Residues 286–306 form a helical membrane-spanning segment; it reads VEMIFNIFYMLFNLGLTAYLI. At 307–855 the chain is on the cytoplasmic side; the sequence is GNMTNLVVEG…VASMDSVSGS (549 aa). 391–511 is a binding site for a nucleoside 3',5'-cyclic phosphate; it reads LFKGVSREVL…VVIIKNFLKH (121 aa). ANK repeat units lie at residues 536–565, 569–598, 602–631, 634–663, and 667–696; these read NIPC…DPDV, KGRT…NVNI, QGNT…VSSP, AAGD…AVDS, and DGAT…SVDR. The interval 744–765 is disordered; the sequence is EVGSSGDSRNGRRQSARSDGAH. A KHA domain is found at 768-855; sequence RVSIYRGHPF…VASMDSVSGS (88 aa).

The protein belongs to the potassium channel family. Plant (TC 1.A.1.4) subfamily. As to quaternary structure, the potassium channel is probably a homo- or heterotetrameric complex of pore-forming subunits.

It localises to the membrane. Probable inward-rectifying potassium channel. Assuming opened or closed conformations in response to the voltage difference across the membrane, the channel is activated by hyperpolarization. The polypeptide is Potassium channel AKT2 (Oryza sativa subsp. japonica (Rice)).